A 158-amino-acid chain; its full sequence is Transcription elongation factor GreA (158 aa).

Positions 4–70 form a coiled coil; sequence QKQYPMTQEG…IEQDIQRIEH (67 aa).

It belongs to the GreA/GreB family.

Its function is as follows. Necessary for efficient RNA polymerase transcription elongation past template-encoded arresting sites. The arresting sites in DNA have the property of trapping a certain fraction of elongating RNA polymerases that pass through, resulting in locked ternary complexes. Cleavage of the nascent transcript by cleavage factors such as GreA or GreB allows the resumption of elongation from the new 3'terminus. GreA releases sequences of 2 to 3 nucleotides. In Staphylococcus aureus (strain Mu3 / ATCC 700698), this protein is Transcription elongation factor GreA.